The chain runs to 39 residues: Cytochrome b559 subunit beta (39 aa).

Residues 14–30 form a helical membrane-spanning segment; sequence WLAVHGLAVPTVFFLGA. Residue H18 coordinates heme.

Belongs to the PsbE/PsbF family. As to quaternary structure, heterodimer of an alpha subunit and a beta subunit. PSII is composed of 1 copy each of membrane proteins PsbA, PsbB, PsbC, PsbD, PsbE, PsbF, PsbH, PsbI, PsbJ, PsbK, PsbL, PsbM, PsbT, PsbX, PsbY, PsbZ, Psb30/Ycf12, at least 3 peripheral proteins of the oxygen-evolving complex and a large number of cofactors. It forms dimeric complexes. Heme b is required as a cofactor.

The protein localises to the plastid. Its subcellular location is the chloroplast thylakoid membrane. Its function is as follows. This b-type cytochrome is tightly associated with the reaction center of photosystem II (PSII). PSII is a light-driven water:plastoquinone oxidoreductase that uses light energy to abstract electrons from H(2)O, generating O(2) and a proton gradient subsequently used for ATP formation. It consists of a core antenna complex that captures photons, and an electron transfer chain that converts photonic excitation into a charge separation. This Physcomitrium patens (Spreading-leaved earth moss) protein is Cytochrome b559 subunit beta.